The chain runs to 176 residues: DELTA-stichotoxin-She4a (176 aa).

The interval 2-11 (ELAGTIIDGA) is plays an important role in the hemolytic activity. Residues 10–29 (GASLTFEVLDKVLGELGKVS) form an N-terminal region region. The phosphocholine site is built by Ser-53, Val-86, Ser-104, Pro-106, Tyr-132, Tyr-136, and Tyr-137. The interval 104 to 119 (SVPFDYNWYSNWWDVK) is trp-rich region, which is important for the binding to lipid membrane. The Cell attachment site motif lies at 142 to 144 (RGD).

Octamer or nonamer in membranes. Monomer in the soluble state.

It localises to the secreted. It is found in the nematocyst. Its subcellular location is the target cell membrane. Its function is as follows. Pore-forming protein that forms cations-selective hydrophilic pores of around 1 nm and causes cardiac stimulation and cytolysis. Pore formation is a multi-step process that involves specific recognition of membrane sphingomyelin (but neither cholesterol nor phosphatidylcholine) using aromatic rich region and adjacent phosphocholine (POC) binding site, firm binding to the membrane (mainly driven by hydrophobic interactions) accompanied by the transfer of the N-terminal region to the lipid-water interface and finally pore formation after oligomerization of monomers. Cytolytic effects include red blood cells hemolysis, platelet aggregation and lysis, cytotoxic and cytostatic effects on fibroblasts. Lethality in mammals has been ascribed to severe vasospasm of coronary vessels, cardiac arrhythmia, and inotropic effects. This chain is DELTA-stichotoxin-She4a, found in Stichodactyla helianthus (Sun anemone).